The sequence spans 334 residues: UDP-N-acetylglucosamine--N-acetylmuramyl-(pentapeptide) pyrophosphoryl-undecaprenol N-acetylglucosamine transferase (334 aa).

Residues Thr-11–Gly-13, Asn-125, Ser-185, Ile-229, and Gln-274 each bind UDP-N-acetyl-alpha-D-glucosamine.

It belongs to the glycosyltransferase 28 family. MurG subfamily.

The protein localises to the cell inner membrane. It catalyses the reaction di-trans,octa-cis-undecaprenyl diphospho-N-acetyl-alpha-D-muramoyl-L-alanyl-D-glutamyl-meso-2,6-diaminopimeloyl-D-alanyl-D-alanine + UDP-N-acetyl-alpha-D-glucosamine = di-trans,octa-cis-undecaprenyl diphospho-[N-acetyl-alpha-D-glucosaminyl-(1-&gt;4)]-N-acetyl-alpha-D-muramoyl-L-alanyl-D-glutamyl-meso-2,6-diaminopimeloyl-D-alanyl-D-alanine + UDP + H(+). The protein operates within cell wall biogenesis; peptidoglycan biosynthesis. Its function is as follows. Cell wall formation. Catalyzes the transfer of a GlcNAc subunit on undecaprenyl-pyrophosphoryl-MurNAc-pentapeptide (lipid intermediate I) to form undecaprenyl-pyrophosphoryl-MurNAc-(pentapeptide)GlcNAc (lipid intermediate II). The chain is UDP-N-acetylglucosamine--N-acetylmuramyl-(pentapeptide) pyrophosphoryl-undecaprenol N-acetylglucosamine transferase from Thermosipho melanesiensis (strain DSM 12029 / CIP 104789 / BI429).